We begin with the raw amino-acid sequence, 632 residues long: Glycerophosphodiester phosphodiesterase domain-containing protein 4 (632 aa).

Topologically, residues 1–64 are cytoplasmic; sequence MEETQDSSSS…GSCCCSRKEQ (64 aa). Residues 65 to 85 traverse the membrane as a helical segment; that stretch reads FFYMCLVIAFILSVLFLFVWV. The Extracellular segment spans residues 86-114; that stretch reads ETSNEYNGFDWVVYLGTGCWFFWSILVLS. A helical membrane pass occupies residues 115-135; it reads AAGIMVAYTTLLLLLGFLLLW. At 136–147 the chain is on the cytoplasmic side; sequence ERIELNLHTSHK. The chain crosses the membrane as a helical span at residues 148–168; that stretch reads VFICLVIVLCSFLLAVLSHFW. Residues 169–180 lie on the Extracellular side of the membrane; that stretch reads KDKWLIAGLSLQ. A helical transmembrane segment spans residues 181 to 201; it reads IFAPFVHLSLITVMIIISWPL. Topologically, residues 202-240 are cytoplasmic; that stretch reads SICVARLESEVKVRRYRMADYEQEIQERCNVFQRLRALQ. Residues 241–261 traverse the membrane as a helical segment; the sequence is IAAGLSFLIILLCLYLMPLGI. At 262–542 the chain is on the extracellular side; the sequence is YSPCILKKEN…SRPLFFMTPG (281 aa). The GP-PDE domain maps to 276-533; that stretch reads PTLFGHRGAP…DNIELLNQLS (258 aa). A divalent metal cation is bound by residues Glu-308, Asp-310, and His-323. N-linked (GlcNAc...) asparagine glycosylation is found at Asn-343, Asn-349, Asn-384, and Asn-473. A helical transmembrane segment spans residues 543–563; it reads FYMFMWLFLDIASAVIIGFVF. The Cytoplasmic segment spans residues 564–632; it reads CYNWIKEIKR…QKTEPKTENL (69 aa). The tract at residues 596–632 is disordered; that stretch reads ENNDASQQKPEVAPTSANLAPENMIELQKTEPKTENL. Basic and acidic residues predominate over residues 623 to 632; it reads QKTEPKTENL.

It belongs to the glycerophosphoryl diester phosphodiesterase family. As to expression, detected in testis, in particular in spermatocytes.

Its subcellular location is the cytoplasm. It localises to the membrane. The polypeptide is Glycerophosphodiester phosphodiesterase domain-containing protein 4 (Gdpd4) (Mus musculus (Mouse)).